The following is a 156-amino-acid chain: Biotin carboxyl carrier protein of acetyl-CoA carboxylase (156 aa).

The region spanning 80 to 156 is the Biotinyl-binding domain; it reads GNVVRSPMVG…EFDQPLFTIV (77 aa). N6-biotinyllysine is present on Lys-122.

Homodimer.

Its pathway is lipid metabolism; fatty acid biosynthesis. Its function is as follows. This protein is a component of the acetyl coenzyme A carboxylase complex; first, biotin carboxylase catalyzes the carboxylation of the carrier protein and then the transcarboxylase transfers the carboxyl group to form malonyl-CoA. This Pseudomonas aeruginosa (strain ATCC 15692 / DSM 22644 / CIP 104116 / JCM 14847 / LMG 12228 / 1C / PRS 101 / PAO1) protein is Biotin carboxyl carrier protein of acetyl-CoA carboxylase (accB).